The following is a 466-amino-acid chain: Ras GTPase-activating protein-binding protein 1 (466 aa).

Residues 11-133 enclose the NTF2 domain; that stretch reads VGREFVRQYY…FYVHNDIFRY (123 aa). Residues Lys36, Lys50, Lys59, Lys64, Lys76, and Lys123 each participate in a glycyl lysine isopeptide (Lys-Gly) (interchain with G-Cter in ubiquitin) cross-link. An acidic disordered region region spans residues 142–225; sequence VTEPQEESEE…EPVLEETAPE (84 aa). Thr143 bears the Phosphothreonine mark. Disordered stretches follow at residues 144–172 and 184–243; these read EPQEESEEEVEEPEERQQTPEVVPDDSGT and EEHL…QTVQ. Composition is skewed to acidic residues over residues 145-157 and 185-206; these read PQEESEEEVEEPE and EHLEEPVAEPEPDPEPEPEQEP. Ser149 is subject to Phosphoserine. Phosphoserine occurs at positions 231, 232, 250, and 253. Residues 255–329 form a disordered region; it reads TSKNLPPSGA…REAGEQGDIE (75 aa). 2 stretches are compositionally biased toward basic and acidic residues: residues 297-307 and 318-329; these read PQRDQRVREQR and PIREAGEQGDIE. The RRM domain maps to 340–415; sequence HQLFIGNLPH…VRLNVEEKKT (76 aa). Glycyl lysine isopeptide (Lys-Gly) (interchain with G-Cter in ubiquitin) cross-links involve residues Lys353 and Lys357. Residue Ser373 is modified to Phosphoserine. Lys376 participates in a covalent cross-link: Glycyl lysine isopeptide (Lys-Gly) (interchain with G-Cter in ubiquitin). Residue Lys376 is modified to N6-acetyllysine; alternate. Residue Lys376 forms a Glycyl lysine isopeptide (Lys-Gly) (interchain with G-Cter in SUMO2); alternate linkage. Lys393 is covalently cross-linked (Glycyl lysine isopeptide (Lys-Gly) (interchain with G-Cter in ubiquitin); alternate). The segment at 410–466 is RG-rich region; it reads VEEKKTRAAREGDRRDNRLRGPGGPRGGLGGGMRGPPRGGMVQKPGFGVGRGLAPRQ. Residues 413–428 are compositionally biased toward basic and acidic residues; the sequence is KKTRAAREGDRRDNRL. The disordered stretch occupies residues 413–466; that stretch reads KKTRAAREGDRRDNRLRGPGGPRGGLGGGMRGPPRGGMVQKPGFGVGRGLAPRQ. At Arg429 the chain carries Asymmetric dimethylarginine. Over residues 430–447 the composition is skewed to gly residues; it reads GPGGPRGGLGGGMRGPPR. Arg435 carries the post-translational modification Asymmetric dimethylarginine; alternate. At Arg435 the chain carries Dimethylated arginine; alternate. Residue Arg435 is modified to Omega-N-methylarginine; alternate. Position 447 is an omega-N-methylarginine (Arg447). A Dimethylated arginine; alternate modification is found at Arg460. At Arg460 the chain carries Omega-N-methylarginine; alternate. The residue at position 465 (Arg465) is an Omega-N-methylarginine.

Homodimer and oligomer. Component of a TAU mRNP complex, at least composed of IGF2BP1, ELAVL4 and G3BP1. Binds to the SH3 domain of Ras GTPase-activating protein (RASA1) in proliferating cells. No interaction in quiescent cells. Interacts (via NTF2 domain) with USP10; inhibiting stress granule formation by lowering G3BP1 valence. Interacts (via NTF2 domain) with CAPRIN1; promoting stress granule formation by lowering the saturation-concentration of G3BP1. Interacts (via NTF2 domain) with UBAP2L; promoting stress granule formation. Associates (via RG-rich region) with 40S ribosome subunits. Interacts with RPTOR and SPAG5; this complex is increased by oxidative stress. Interacts with ATXN2L. Interacts with STYXL1. Interacts with CGAS (via N-terminus); this interaction promotes the DNA-binding and activation of CGAS. Interacts (via C-terminus) with RIGI. Interacts with PABPC1. Interacts with QKI (isoforms QKI6 and QKI7); directing N(7)-methylguanine-containing mRNAs to stress granules. In terms of assembly, (Microbial infection) Interacts with Semliki forest virus non-structural protein 3 (via C-terminus); this interaction inhibits the formation of stress granules on viral mRNAs and the nsp3-G3BP1 complexes bind viral RNAs and probably orchestrate the assembly of viral replication complexes. As to quaternary structure, (Microbial infection) Interacts with Chikungunya virus non-structural protein 3 (via C-terminus); this interaction inhibits the formation of stress granules on viral mRNAs and the nsp3-G3BP1 complexes bind viral RNAs and probably orchestrate the assembly of viral replication complexes. (Microbial infection) Interacts with Sindbis virus non-structural protein 3 (via C-terminus); this interaction inhibits the formation of stress granules on viral mRNAs and the nsp3-G3BP1 complexes bind viral RNAs and probably orchestrate the assembly of viral replication complexes. In terms of assembly, (Microbial infection) Interacts with Zika virus capsid protein C; this interaction is probably linked to the inhibition of stress granules formation by the virus. As to quaternary structure, (Microbial infection) Interacts with reovirus type 2 protein sigma-NS; this interaction induces the relocalization of G3BP1 to the outer periphery of sigma-NS/mu-Ns viral factories and is probably involved in the suppression of the integrated stress response by the virus. (Microbial infection) Interacts with SARS-CoV-2 N protein; the interaction is enhanced by host HDAC6 which deacetylates the viral N protein and promotes N protein association with G3BP1, disrupting stress granule formation and facilitating viral replication. Interacts with HDAC6; the interaction increases during SARS-CoV-2 infection. The cofactor is Mg(2+). In terms of processing, phosphorylation of the acidic disordered region regulates stress granule assembly. RASA1-dependent phosphorylation of Ser-149 induces a conformational change that prevents self-association. Dephosphorylation after HRAS activation is required for stress granule assembly. Ser-149 phosphorylation induces partial nuclear localization. Ubiquitinated by TRIM21 via 'Lys-63'-linked polyubiquitination in the NTF2 domain in response to heat shock, leading to stress granule disassembly: ubiquitination promotes interaction with the FAF2 adapter, followed by interaction with VCP, which extracts G3BP1 from stress granules, leading to stress granule disassembly. In case of prolonged stress, ubiquitination by TRIM21 leads to autophagy-dependent degradation of G3BP1 via recruitment of ubiquitinated G3BP1 by SQSTM1 and/or CALCOCO2 to autophagosomes. Post-translationally, (Microbial infection) Cleaved by human enterovirus 71; this cleavage induces the disassembly of cytoplasmic stress granules. Cleaved by Foot-and-mouth disease virus; this cleavage suppresses the formation of cytoplasmic stress granules. In terms of processing, arg-435 is dimethylated, probably to asymmetric dimethylarginine. (Microbial infection) Cleaved by Encephalomyocarditis virus protease 3C; this cleavage suppresses the formation of cytoplasmic stress granules. As to expression, ubiquitous.

It localises to the cytoplasm. Its subcellular location is the cytosol. The protein resides in the perikaryon. The protein localises to the stress granule. It is found in the nucleus. It catalyses the reaction ATP + H2O = ADP + phosphate + H(+). With respect to regulation, under physiological conditions, G3BP1 adopts a compact state that is stabilized by intramolecular interactions between the RG-rich and the acidic regions that inhibit phase separation. Upon stress, polysomes disassemble and mRNAs are released in an unfolded protein-free state. Binding of unfolded mRNA to G3BP1 outcompetes the intramolecular interactions and RNA-bound G3BP1 adopts an expanded conformation in which the RG-rich region becomes exposed to engage in protein-protein and protein-RNA interactions, allowing physical cross-linking of RNA molecules to form protein-RNA condensates, leading to liquid-liquid phase separation (LLPS). Its function is as follows. Protein involved in various processes, such as stress granule formation and innate immunity. Plays an essential role in stress granule formation. Stress granules are membraneless compartments that store mRNAs and proteins, such as stalled translation pre-initiation complexes, in response to stress. Promotes formation of stress granules phase-separated membraneless compartment by undergoing liquid-liquid phase separation (LLPS) upon unfolded RNA-binding: functions as a molecular switch that triggers RNA-dependent LLPS in response to a rise in intracellular free RNA concentrations. Also acts as an ATP- and magnesium-dependent helicase: unwinds DNA/DNA, RNA/DNA, and RNA/RNA substrates with comparable efficiency. Acts unidirectionally by moving in the 5' to 3' direction along the bound single-stranded DNA. Unwinds preferentially partial DNA and RNA duplexes having a 17 bp annealed portion and either a hanging 3' tail or hanging tails at both 5'- and 3'-ends. Plays an essential role in innate immunity by promoting CGAS and RIGI activity. Participates in the DNA-triggered cGAS/STING pathway by promoting the DNA binding and activation of CGAS. Triggers the condensation of cGAS, a process probably linked to the formation of membrane-less organelles. Also enhances RIGI-induced type I interferon production probably by helping RIGI at sensing pathogenic RNA. May also act as a phosphorylation-dependent sequence-specific endoribonuclease in vitro: Cleaves exclusively between cytosine and adenine and cleaves MYC mRNA preferentially at the 3'-UTR. The chain is Ras GTPase-activating protein-binding protein 1 from Homo sapiens (Human).